Reading from the N-terminus, the 349-residue chain is Hydroxymethylglutaryl-CoA synthase (349 aa).

(3S)-3-hydroxy-3-methylglutaryl-CoA-binding residues include Asp30 and Ala31. Glu82 (proton donor/acceptor) is an active-site residue. The (3S)-3-hydroxy-3-methylglutaryl-CoA site is built by Cys114 and Thr155. Cys114 serves as the catalytic Acyl-thioester intermediate. Residue Arg203 coordinates CoA. Positions 205 and 238 each coordinate (3S)-3-hydroxy-3-methylglutaryl-CoA. Residue His238 is the Proton donor/acceptor of the active site. Residue Lys243 coordinates CoA. (3S)-3-hydroxy-3-methylglutaryl-CoA-binding residues include Asn270 and Ser300.

It belongs to the thiolase-like superfamily. Archaeal HMG-CoA synthase family. Interacts with acetoacetyl-CoA thiolase that catalyzes the precedent step in the pathway and with a DUF35 protein. The acetoacetyl-CoA thiolase/HMG-CoA synthase complex channels the intermediate via a fused CoA-binding site, which allows for efficient coupling of the endergonic thiolase reaction with the exergonic HMGCS reaction.

It carries out the reaction acetoacetyl-CoA + acetyl-CoA + H2O = (3S)-3-hydroxy-3-methylglutaryl-CoA + CoA + H(+). The protein operates within metabolic intermediate biosynthesis; (R)-mevalonate biosynthesis; (R)-mevalonate from acetyl-CoA: step 2/3. Its function is as follows. Catalyzes the condensation of acetyl-CoA with acetoacetyl-CoA to form 3-hydroxy-3-methylglutaryl-CoA (HMG-CoA). Functions in the mevalonate (MVA) pathway leading to isopentenyl diphosphate (IPP), a key precursor for the biosynthesis of isoprenoid compounds that are building blocks of archaeal membrane lipids. This chain is Hydroxymethylglutaryl-CoA synthase, found in Methanococcus maripaludis (strain C5 / ATCC BAA-1333).